We begin with the raw amino-acid sequence, 407 residues long: Shaggy-related protein kinase iota (407 aa).

The span at 1–19 (MASLPLGPQPHALAPPLQL) shows a compositional bias: low complexity. The segment at 1–23 (MASLPLGPQPHALAPPLQLHDGD) is disordered. A2 carries the post-translational modification N-acetylalanine. The 285-residue stretch at 70 to 354 (YMAERVVGTG…ALEACAHPFF (285 aa)) folds into the Protein kinase domain. ATP is bound by residues 76 to 84 (VGTGSFGIV) and K99. Catalysis depends on D195, which acts as the Proton acceptor. A Phosphotyrosine modification is found at Y230.

This sequence belongs to the protein kinase superfamily. CMGC Ser/Thr protein kinase family. GSK-3 subfamily. As to quaternary structure, binds to KIB1. Interacts with BSK6. In terms of processing, autophosphorylated mainly on threonine and serine residues.

The enzyme catalyses L-seryl-[protein] + ATP = O-phospho-L-seryl-[protein] + ADP + H(+). It catalyses the reaction L-threonyl-[protein] + ATP = O-phospho-L-threonyl-[protein] + ADP + H(+). In terms of biological role, phosphorylates BSK1, BSK3, BSK5, BSK6, BSK8 and BSK11 in vitro. May mediate extracellular signals to regulate transcription in differentiating cells. The sequence is that of Shaggy-related protein kinase iota (ASK9) from Arabidopsis thaliana (Mouse-ear cress).